A 249-amino-acid polypeptide reads, in one-letter code: Bax inhibitor 1 (249 aa).

The next 6 helical transmembrane spans lie at 39–59, 65–85, 93–113, 119–139, 151–171, and 213–233; these read LVYL…YLHV, GMLT…VPVF, ILLA…KLAV, ILVT…CAAI, GLLS…SIFG, and HALT…VIML.

The protein belongs to the BI1 family. In terms of tissue distribution, ubiquitous.

Its subcellular location is the membrane. Functionally, suppressor of apoptosis. The chain is Bax inhibitor 1 (BI1) from Oryza sativa subsp. japonica (Rice).